The following is a 797-amino-acid chain: Kinesin-like protein KIF18B (797 aa).

One can recognise a Kinesin motor domain in the interval 11–352 (TVAVVVRVRP…LKYANRAKEI (342 aa)). 110–117 (GATGAGKT) provides a ligand contact to ATP. Residues 367–402 (ISKYATICEQLKTEVADLQAKLRAYEDAARDAGKQI) adopt a coiled-coil conformation. 4 disordered regions span residues 412 to 476 (EEAV…PNRL), 528 to 564 (AAVS…PSVP), 579 to 640 (LSSP…KEPQ), and 730 to 797 (KGSS…SGPR). Polar residues predominate over residues 594–608 (MSNTSRLETPHSLNT). Residues 731 to 744 (GSSIPKPSSISKGS) show a composition bias toward low complexity.

This sequence belongs to the TRAFAC class myosin-kinesin ATPase superfamily. Kinesin family.

It localises to the nucleus. It is found in the cytoplasm. The protein resides in the cytoskeleton. Functionally, may play an important role in microtubule plus-end depolymerizing activity in mitotic cells. This Gallus gallus (Chicken) protein is Kinesin-like protein KIF18B (KIF18B).